Reading from the N-terminus, the 333-residue chain is Homeobox protein Hox-A1 (333 aa).

The disordered stretch occupies residues 61-82; sequence ITSPHHHHHHHHHPQPATYQTS. The segment covering 64–74 has biased composition (basic residues); that stretch reads PHHHHHHHHHP. The tract at residues 74-202 is interaction with OGT; it reads PQPATYQTSG…PASETSSPAQ (129 aa). Thr152 carries O-linked (GlcNAc) threonine glycosylation. The Antp-type hexapeptide signature appears at 203 to 208; it reads TFDWMK. Positions 227 to 286 form a DNA-binding region, homeobox; that stretch reads QPNAVRTNFTTKQLTELEKEFHFNKYLTRARSEIAASLQLNETQVKIWFQNRRMKQKKRE. The tract at residues 279 to 333 is disordered; sequence RMKQKKREKEGLLPMSPATPPGSDEKTEESSEKSSSSPSAPSPASSTSDTLTTSH. The span at 301–310 shows a compositional bias: basic and acidic residues; sequence SDEKTEESSE. Positions 311 to 333 are enriched in low complexity; it reads KSSSSPSAPSPASSTSDTLTTSH.

Belongs to the Antp homeobox family. Labial subfamily. Interacts with OGT (via TPR repeats domain); the interaction takes place mainly in the nucleus. Forms a DNA-binding heterodimer with transcription factor PBX1. Glycosylated by OGT.

The protein localises to the nucleus. In terms of biological role, sequence-specific transcription factor. Regulates multiple developmental processes including brainstem, inner and outer ear, abducens nerve and cardiovascular development and morphogenesis as well as cognition and behavior. Also part of a developmental regulatory system that provides cells with specific positional identities on the anterior-posterior axis. Acts on the anterior body structures. Seems to act in the maintenance and/or generation of hindbrain segments. Activates transcription in the presence of PBX1A and PKNOX1. The polypeptide is Homeobox protein Hox-A1 (Hoxa1) (Rattus norvegicus (Rat)).